A 504-amino-acid chain; its full sequence is Amidophosphoribosyltransferase (504 aa).

The active-site Nucleophile is cysteine 2. Residues 2 to 235 (CGIVGIVSQS…PGEAIYVTFE (234 aa)) form the Glutamine amidotransferase type-2 domain. Positions 305, 367, and 368 each coordinate Mg(2+).

In the C-terminal section; belongs to the purine/pyrimidine phosphoribosyltransferase family. Mg(2+) serves as cofactor.

The catalysed reaction is 5-phospho-beta-D-ribosylamine + L-glutamate + diphosphate = 5-phospho-alpha-D-ribose 1-diphosphate + L-glutamine + H2O. Its pathway is purine metabolism; IMP biosynthesis via de novo pathway; N(1)-(5-phospho-D-ribosyl)glycinamide from 5-phospho-alpha-D-ribose 1-diphosphate: step 1/2. Catalyzes the formation of phosphoribosylamine from phosphoribosylpyrophosphate (PRPP) and glutamine. In Pasteurella multocida (strain Pm70), this protein is Amidophosphoribosyltransferase.